The primary structure comprises 347 residues: Sensor protein VraS (347 aa).

2 helical membrane passes run 13–33 and 43–63; these read ILVYSMLAAFLFIDKVFVNII and IFGIPVFLFLNLIIILLCIIV. Positions 150–341 constitute a Histidine kinase domain; sequence RLARELHDSV…RIEVKAPLNK (192 aa). The residue at position 156 (His156) is a Phosphohistidine.

Post-translationally, autophosphorylated on His-156.

It localises to the cell membrane. The catalysed reaction is ATP + protein L-histidine = ADP + protein N-phospho-L-histidine.. In terms of biological role, member of the two-component regulatory system PprA/PprB involved in biofilm formation by controlling the expression of many related genes including type IVb pili major subunit flp pilin, adhesin bapA or cupE fimbriae. Also modulates quorum-sensing signal production acting on both negative and positive modulators. Functions as a heme sensor histidine kinase which is autophosphorylated at a histidine residue and transfers its phosphate group to PprB. The protein is Sensor protein VraS (vraS) of Staphylococcus aureus (strain COL).